A 258-amino-acid chain; its full sequence is Isoprenyl transferase (258 aa).

Asp-38 is an active-site residue. Asp-38 is a binding site for Mg(2+). Substrate contacts are provided by residues 39 to 42, Trp-43, Arg-51, His-55, and 83 to 85; these read GNGR and STE. Asn-86 (proton acceptor) is an active-site residue. Substrate is bound by residues Trp-87, Arg-89, Arg-206, and 212–214; that span reads RIS. Residue Glu-225 participates in Mg(2+) binding.

Belongs to the UPP synthase family. As to quaternary structure, homodimer. The cofactor is Mg(2+).

Functionally, catalyzes the condensation of isopentenyl diphosphate (IPP) with allylic pyrophosphates generating different type of terpenoids. The chain is Isoprenyl transferase from Bacillus cereus (strain ATCC 14579 / DSM 31 / CCUG 7414 / JCM 2152 / NBRC 15305 / NCIMB 9373 / NCTC 2599 / NRRL B-3711).